The primary structure comprises 513 residues: Zinc finger CCCH-type with G patch domain-containing protein (513 aa).

The C3H1-type zinc finger occupies 155–178 (PCSYYLEGECRFDETKCRFSHGAL). Residues 252-261 (DQEEDDELSS) are compositionally biased toward acidic residues. A disordered region spans residues 252 to 282 (DQEEDDELSSEESNSSMNNESSDEAESDMDD). Over residues 262-271 (EESNSSMNNE) the composition is skewed to low complexity. Residues 272-282 (SSDEAESDMDD) show a composition bias toward acidic residues. In terms of domain architecture, G-patch spans 312 to 358 (TRGIGSKLMEKMGYIHGTGLGSDGRGIVTPVSAQILPQGRSLDACME). Residues 478–495 (VQMQSHKQELATLQAQER) show a composition bias toward polar residues. Residues 478–513 (VQMQSHKQELATLQAQERSLSKEQQTRKSKNKMFEF) are disordered. Residues 496–513 (SLSKEQQTRKSKNKMFEF) show a composition bias toward basic and acidic residues.

It is found in the nucleus. Transcription repressor. The polypeptide is Zinc finger CCCH-type with G patch domain-containing protein (Drosophila erecta (Fruit fly)).